A 291-amino-acid polypeptide reads, in one-letter code: Beta-lactamase CTX-M-15 (291 aa).

An N-terminal signal peptide occupies residues 1–28 (MVKKSLRQFTLMATATVTLLLGSVPLYA). The active-site Nucleophile; acyl-ester intermediate is Ser73. Residues Lys76, Ser133, Glu169, and Ser240 each coordinate a beta-lactam.

It belongs to the class-A beta-lactamase family. As to quaternary structure, monomer.

It is found in the secreted. It catalyses the reaction a beta-lactam + H2O = a substituted beta-amino acid. With respect to regulation, inhibited by the beta-lactamase-blocking agents clavulanic acid and avibactam, via a covalent binding to Ser-73. In terms of biological role, extended-spectrum beta-lactamase (ESBL) which confers resistance to penicillins, as well as first, second, third and fourth-generation cephalosporins. Has cefotaxime- and ceftazidime-hydrolyzing activity. Inactive against the carbapenem antibiotics, imipenem, meropenem and ertapenem. The chain is Beta-lactamase CTX-M-15 from Escherichia coli O25b:H4.